The sequence spans 161 residues: Putative sporulation sigma factor-processing peptidase (161 aa).

Aspartate 38 is an active-site residue.

This sequence belongs to the peptidase U4 family.

Its function is as follows. Probably activates the RNA polymerase sigma-35 factor at the stage II of sporulation. This is Putative sporulation sigma factor-processing peptidase from Bacillus thuringiensis subsp. kurstaki.